Here is a 241-residue protein sequence, read N- to C-terminus: Sugar fermentation stimulation protein homolog (241 aa).

The protein belongs to the SfsA family.

This is Sugar fermentation stimulation protein homolog from Yersinia enterocolitica serotype O:8 / biotype 1B (strain NCTC 13174 / 8081).